We begin with the raw amino-acid sequence, 122 residues long: Large ribosomal subunit protein uL14 (122 aa).

The protein belongs to the universal ribosomal protein uL14 family. Part of the 50S ribosomal subunit. Forms a cluster with proteins L3 and L19. In the 70S ribosome, L14 and L19 interact and together make contacts with the 16S rRNA in bridges B5 and B8.

Its function is as follows. Binds to 23S rRNA. Forms part of two intersubunit bridges in the 70S ribosome. This chain is Large ribosomal subunit protein uL14, found in Syntrophus aciditrophicus (strain SB).